Reading from the N-terminus, the 338-residue chain is Oxygen-dependent coproporphyrinogen-III oxidase (338 aa).

Ser104 contributes to the substrate binding site. A divalent metal cation-binding residues include His108 and His118. The active-site Proton donor is His118. 120–122 lines the substrate pocket; that stretch reads NYR. Residues His152 and His182 each coordinate a divalent metal cation. The interval 274-309 is important for dimerization; sequence YVEFNLVYDRGTIFGLQTNGRTESILMSLPPLVRWE.

This sequence belongs to the aerobic coproporphyrinogen-III oxidase family. As to quaternary structure, homodimer. Requires a divalent metal cation as cofactor.

It localises to the cytoplasm. It catalyses the reaction coproporphyrinogen III + O2 + 2 H(+) = protoporphyrinogen IX + 2 CO2 + 2 H2O. The protein operates within porphyrin-containing compound metabolism; protoporphyrin-IX biosynthesis; protoporphyrinogen-IX from coproporphyrinogen-III (O2 route): step 1/1. Involved in the heme and chlorophyll biosynthesis. Catalyzes the aerobic oxidative decarboxylation of propionate groups of rings A and B of coproporphyrinogen-III to yield the vinyl groups in protoporphyrinogen-IX. The polypeptide is Oxygen-dependent coproporphyrinogen-III oxidase (Thermosynechococcus vestitus (strain NIES-2133 / IAM M-273 / BP-1)).